Consider the following 160-residue polypeptide: SsrA-binding protein (160 aa).

Over residues 137–153 the composition is skewed to basic and acidic residues; sequence DKRDDIKTREWKQDKAR. The disordered stretch occupies residues 137–160; the sequence is DKRDDIKTREWKQDKARIMKNANR.

The protein belongs to the SmpB family.

It is found in the cytoplasm. In terms of biological role, required for rescue of stalled ribosomes mediated by trans-translation. Binds to transfer-messenger RNA (tmRNA), required for stable association of tmRNA with ribosomes. tmRNA and SmpB together mimic tRNA shape, replacing the anticodon stem-loop with SmpB. tmRNA is encoded by the ssrA gene; the 2 termini fold to resemble tRNA(Ala) and it encodes a 'tag peptide', a short internal open reading frame. During trans-translation Ala-aminoacylated tmRNA acts like a tRNA, entering the A-site of stalled ribosomes, displacing the stalled mRNA. The ribosome then switches to translate the ORF on the tmRNA; the nascent peptide is terminated with the 'tag peptide' encoded by the tmRNA and targeted for degradation. The ribosome is freed to recommence translation, which seems to be the essential function of trans-translation. The sequence is that of SsrA-binding protein from Edwardsiella ictaluri (strain 93-146).